We begin with the raw amino-acid sequence, 179 residues long: Large ribosomal subunit protein uL5 (179 aa).

This sequence belongs to the universal ribosomal protein uL5 family. In terms of assembly, part of the 50S ribosomal subunit; part of the 5S rRNA/L5/L18/L25 subcomplex. Contacts the 5S rRNA and the P site tRNA. Forms a bridge to the 30S subunit in the 70S ribosome.

This is one of the proteins that bind and probably mediate the attachment of the 5S RNA into the large ribosomal subunit, where it forms part of the central protuberance. In the 70S ribosome it contacts protein S13 of the 30S subunit (bridge B1b), connecting the 2 subunits; this bridge is implicated in subunit movement. Contacts the P site tRNA; the 5S rRNA and some of its associated proteins might help stabilize positioning of ribosome-bound tRNAs. This is Large ribosomal subunit protein uL5 from Pseudoalteromonas translucida (strain TAC 125).